The chain runs to 373 residues: P2Y purinoceptor 1 (373 aa).

Over 1-51 the chain is Extracellular; that stretch reads MTEVLWPAVPNGTDAAFLAGPGSSWGNSTVASTAAVSSSFKCALTKTGFQF. 2 N-linked (GlcNAc...) asparagine glycosylation sites follow: asparagine 11 and asparagine 27. Intrachain disulfides connect cysteine 42–cysteine 296 and cysteine 124–cysteine 202. Lysine 46 serves as a coordination point for ADP. Residues 52 to 74 traverse the membrane as a helical segment; it reads YYLPAVYILVFIIGFLGNSVAIW. The Cytoplasmic portion of the chain corresponds to 75–87; it reads MFVFHMKPWSGIS. A helical membrane pass occupies residues 88-109; that stretch reads VYMFNLALADFLYVLTLPALIF. The Extracellular segment spans residues 110–125; the sequence is YYFNKTDWIFGDAMCK. Asparagine 113 carries an N-linked (GlcNAc...) asparagine glycan. A helical membrane pass occupies residues 126–147; the sequence is LQRFIFHVNLYGSILFLTCISA. Residues 148–166 lie on the Cytoplasmic side of the membrane; the sequence is HRYSGVVYPLKSLGRLKKK. The helical transmembrane segment at 167-188 threads the bilayer; the sequence is NAICISVLVWLIVVVAISPILF. The Extracellular portion of the chain corresponds to 189 to 214; it reads YSGTGVRKNKTITCYDTTSDEYLRSY. The N-linked (GlcNAc...) asparagine glycan is linked to asparagine 197. 203 to 205 serves as a coordination point for ADP; the sequence is YDT. The chain crosses the membrane as a helical span at residues 215-237; sequence FIYSMCTTVAMFCVPLVLILGCY. Residues 238–260 are Cytoplasmic-facing; sequence GLIVRALIYKDLDNSPLRRKSIY. A helical membrane pass occupies residues 261-284; sequence LVIIVLTVFAVSYIPFHVMKTMNL. ADP-binding positions include 283-287, 303-306, and arginine 310; these read NLRAR and YATY. The Extracellular segment spans residues 285 to 303; it reads RARLDFQTPAMCAFNDRVY. A helical membrane pass occupies residues 304–325; that stretch reads ATYQVTRGLASLNSCVDPILYF. The Cytoplasmic portion of the chain corresponds to 326-373; sequence LAGDTFRRRLSRATRKASRRSEANLQSKSEDMTLNILPEFKQNGDTSL.

Belongs to the G-protein coupled receptor 1 family.

The protein localises to the cell membrane. With respect to regulation, ATP functions as antagonist and inhibits ADP-induced mobilization of Ca(2+). The P2Y1 receptor-specific antagonists A3P5PS, A3P5P and A2P5P inhibit downstream signaling mediated by mobilization of Ca(2+) from intracellular stores, and platelet shape changes in response to extracellular ADP. In terms of biological role, receptor for extracellular adenine nucleotides such as ADP. In platelets, binding to ADP leads to mobilization of intracellular calcium ions via activation of phospholipase C, a change in platelet shape, and ultimately platelet aggregation. The polypeptide is P2Y purinoceptor 1 (P2RY1) (Homo sapiens (Human)).